We begin with the raw amino-acid sequence, 432 residues long: Mannose-6-phosphate isomerase 1 (432 aa).

At methionine 1 the chain carries N-acetylmethionine. Zn(2+) contacts are provided by glutamine 124, histidine 126, glutamate 151, and histidine 288. Arginine 307 is a catalytic residue.

The protein belongs to the mannose-6-phosphate isomerase type 1 family. Requires Zn(2+) as cofactor. Constitutively expressed in both vegetative and reproductive organs under normal growth conditions (at protein level).

It catalyses the reaction D-mannose 6-phosphate = D-fructose 6-phosphate. It participates in nucleotide-sugar biosynthesis; GDP-alpha-D-mannose biosynthesis; alpha-D-mannose 1-phosphate from D-fructose 6-phosphate: step 1/2. Its activity is regulated as follows. Inhibited by EDTA, Zn(2+), Cd(2+), Co(2+), p-chloromercuribenzoate and L-ascorbic acid (AsA). Phosphomannose isomerase involved in the synthesis of the GDP-mannose and dolichol-phosphate-mannose required for a number of critical mannosyl transfer reactions. Involved in the ascorbic acid (AsA) biosynthesis. Required during the endosperm development. The chain is Mannose-6-phosphate isomerase 1 (PMI1) from Arabidopsis thaliana (Mouse-ear cress).